Reading from the N-terminus, the 219-residue chain is Transmembrane protein 179B (219 aa).

4 consecutive transmembrane segments (helical) span residues 9-29, 65-85, 98-118, and 162-182; these read VELLLFTAAFLCGALAAATLT, FVAGASGILALYCLLLLFFWV, IGLRIALAISATAIFLILVSA, and LHTAETSSWVNLILWCLALLL. Ser206 bears the Phosphoserine mark.

Belongs to the TMEM179 family.

Its subcellular location is the membrane. The sequence is that of Transmembrane protein 179B (Tmem179b) from Mus musculus (Mouse).